Reading from the N-terminus, the 197-residue chain is Protein jagunal (197 aa).

Residues 1–39 (MATRGGPMVAGTDGNDFEFRQRVAGTYQISLLNKSRLKY) lie on the Cytoplasmic side of the membrane. The helical transmembrane segment at 40 to 60 (CIFFHALLFFVMLAKLTSDIL) threads the bilayer. The Lumenal portion of the chain corresponds to 61 to 78 (DHLDIFVLEIEELEVPPP). A helical transmembrane segment spans residues 79–99 (LWWEYVWAASLLTSFLGLSAA). Residues 100–109 (RGNKVREMQK) lie on the Cytoplasmic side of the membrane. The helical transmembrane segment at 110–130 (YMVAILLFAILPLFYCFAYYF) threads the bilayer. The Lumenal segment spans residues 131–159 (SDVWEFATLDKSVELDETDIFVWRGYPYG). Residues 160 to 180 (VFWYAFCFVGFQVHGFTLYFA) traverse the membrane as a helical segment. The Cytoplasmic portion of the chain corresponds to 181 to 197 (YNLVKAWKARTATRKFQ).

This sequence belongs to the jagunal family.

The protein localises to the endoplasmic reticulum membrane. Its function is as follows. Required for endoplasmic reticulum organization and proper vesicular traffic during vitellogenesis. Required for oocyte and bristle growth. The chain is Protein jagunal from Drosophila melanogaster (Fruit fly).